Reading from the N-terminus, the 2873-residue chain is Fibrillin-1 (2873 aa).

The signal sequence occupies residues Met1 to Gly24. A propeptide spanning residues Ala25–Arg44 is cleaved from the precursor. Positions Arg45–Ile81 are fibrillin unique N-terminal (FUN) domain. Positions Arg45 to Thr452 are N-terminal domain. Cystine bridges form between Cys59/Cys68, Cys67/Cys80, Cys85/Cys94, Cys89/Cys100, Cys102/Cys111, Cys119/Cys129, Cys123/Cys134, Cys136/Cys145, Cys150/Cys160, Cys154/Cys166, and Cys168/Cys177. 3 EGF-like domains span residues Ile81–Gly112, Ser115–Gly146, and Gln147–Glu178. An interaction with MFAP4 region spans residues Cys119–Val329. The region spanning Gly184–Ile236 is the TB 1 domain. The hybrid domain 1 stretch occupies residues Cys195–Cys221. Residues Asp246–Glu287 enclose the EGF-like 4; calcium-binding domain. 6 cysteine pairs are disulfide-bonded: Cys250–Cys262, Cys257–Cys271, Cys273–Cys286, Cys292–Cys304, Cys299–Cys313, and Cys315–Cys328. A glycan (O-linked (Glc) serine) is linked at Ser268. An EGF-like 5; calcium-binding domain is found at Asp288 to Val329. In terms of domain architecture, TB 2 spans Gly334–Cys389. Residue Asn450 is glycosylated (N-linked (GlcNAc...) asparagine). The 41-residue stretch at Val451 to Ile491 folds into the EGF-like 6 domain. 15 cysteine pairs are disulfide-bonded: Cys455–Cys467, Cys462–Cys476, Cys478–Cys490, Cys496–Cys506, Cys501–Cys515, Cys517–Cys530, Cys536–Cys548, Cys543–Cys557, Cys559–Cys572, Cys578–Cys589, Cys584–Cys598, Cys600–Cys613, Cys619–Cys630, Cys625–Cys639, and Cys641–Cys654. Ser473 carries O-linked (Glc) serine glycosylation. The EGF-like 7; calcium-binding domain occupies Asp492 to Arg531. Ser512 is a glycosylation site (O-linked (Glc) serine). The 42-residue stretch at Asp532–Glu573 folds into the EGF-like 8; calcium-binding domain. An EGF-like 9; calcium-binding domain is found at Asp574–Lys614. One can recognise an EGF-like 10; calcium-binding domain in the interval Asp615–Val655. In terms of domain architecture, TB 3 spans Ser661–Cys713. The EGF-like 11; calcium-binding domain occupies Asp725–Val766. 16 cysteine pairs are disulfide-bonded: Cys729–Cys741, Cys736–Cys750, Cys752–Cys765, Cys771–Cys783, Cys778–Cys792, Cys794–Cys807, Cys813–Cys823, Cys818–Cys832, Cys834–Cys847, Cys855–Cys877, Cys864–Cys889, Cys878–Cys892, Cys898–Cys910, Cys916–Cys928, Cys923–Cys937, and Cys939–Cys952. One can recognise an EGF-like 12; calcium-binding domain in the interval Asp767 to Glu808. Residues Asp809–Ile848 enclose the EGF-like 13; calcium-binding domain. The 52-residue stretch at Gly853 to Arg904 folds into the TB 4 domain. Positions Gly862–Ser887 are hybrid domain 2. The region spanning Asp912–Leu953 is the EGF-like 14; calcium-binding domain. One can recognise a TB 5 domain in the interval Glu958–Cys1010. One can recognise an EGF-like 15; calcium-binding domain in the interval Asp1030–Thr1071. 46 disulfide bridges follow: Cys1034–Cys1046, Cys1041–Cys1055, Cys1057–Cys1070, Cys1076–Cys1088, Cys1083–Cys1097, Cys1099–Cys1113, Cys1119–Cys1131, Cys1126–Cys1140, Cys1142–Cys1155, Cys1161–Cys1173, Cys1168–Cys1182, Cys1184–Cys1197, Cys1203–Cys1214, Cys1210–Cys1223, Cys1225–Cys1238, Cys1244–Cys1256, Cys1251–Cys1265, Cys1267–Cys1280, Cys1286–Cys1298, Cys1293–Cys1307, Cys1309–Cys1322, Cys1328–Cys1341, Cys1335–Cys1350, Cys1352–Cys1363, Cys1369–Cys1382, Cys1376–Cys1391, Cys1393–Cys1404, Cys1410–Cys1422, Cys1417–Cys1431, Cys1433–Cys1446, Cys1452–Cys1463, Cys1458–Cys1472, Cys1474–Cys1487, Cys1493–Cys1504, Cys1499–Cys1513, Cys1515–Cys1528, Cys1536–Cys1564, Cys1551–Cys1576, Cys1565–Cys1579, Cys1566–Cys1591, Cys1612–Cys1624, Cys1619–Cys1633, Cys1635–Cys1648, Cys1654–Cys1665, Cys1660–Cys1674, and Cys1676–Cys1689. Residue Asn1069 is glycosylated (N-linked (GlcNAc...) asparagine). Residues Asp1072–Met1114 form the EGF-like 16; calcium-binding domain. The EGF-like 17; calcium-binding domain maps to Asp1115–Ile1156. A glycan (O-linked (Glc) serine) is linked at Ser1137. Asn1151 carries an N-linked (GlcNAc...) asparagine glycan. An EGF-like 18; calcium-binding domain is found at Asp1157 to Val1198. In terms of domain architecture, EGF-like 19; calcium-binding spans Asp1199 to Thr1239. Residue Ser1220 is glycosylated (O-linked (Glc) serine). The EGF-like 20; calcium-binding domain occupies Asp1240 to Val1281. Positions Asp1282–Thr1323 constitute an EGF-like 21; calcium-binding domain. An O-linked (Glc) serine glycan is attached at Ser1304. One can recognise an EGF-like 22; calcium-binding domain in the interval Asp1324–Thr1364. A glycan (O-linked (Glc) serine) is linked at Ser1347. An EGF-like 23; calcium-binding domain is found at Asp1365–Thr1405. An N-linked (GlcNAc...) asparagine glycan is attached at Asn1371. A glycan (O-linked (Glc) serine) is linked at Ser1388. In terms of domain architecture, EGF-like 24; calcium-binding spans Asp1406–Glu1447. The region spanning Asp1448–Thr1488 is the EGF-like 25; calcium-binding domain. Asn1486 is a glycosylation site (N-linked (GlcNAc...) asparagine). The 41-residue stretch at Asp1489–Val1529 folds into the EGF-like 26; calcium-binding domain. An O-linked (Glc) serine glycan is attached at Ser1510. Residues Asp1530–Arg2733 form a C-terminal domain region. One can recognise a TB 6 domain in the interval Gly1534–Cys1591. The short motif at Arg1543 to Asp1545 is the Cell attachment site element. Asn1583 carries an N-linked (GlcNAc...) asparagine glycan. The EGF-like 27; calcium-binding domain maps to Asp1608 to Asp1649. A glycan (O-linked (Glc) serine) is linked at Ser1630. Residues Asp1650–Met1690 form the EGF-like 28; calcium-binding domain. Asn1671 is a glycosylation site (N-linked (GlcNAc...) asparagine). The 56-residue stretch at Ser1695 to Cys1750 folds into the TB 7 domain. N-linked (GlcNAc...) asparagine glycans are attached at residues Asn1705 and Asn1715. In terms of domain architecture, EGF-like 29; calcium-binding spans Asp1768–Glu1809. Disulfide bonds link Cys1772-Cys1784, Cys1779-Cys1793, Cys1795-Cys1808, Cys1814-Cys1826, Cys1820-Cys1835, Cys1837-Cys1849, Cys1855-Cys1867, Cys1862-Cys1876, Cys1878-Cys1891, Cys1897-Cys1907, Cys1902-Cys1916, Cys1918-Cys1930, Cys1936-Cys1949, Cys1944-Cys1958, Cys1960-Cys1973, Cys1979-Cys1991, Cys1986-Cys2000, Cys2002-Cys2013, Cys2019-Cys2031, Cys2026-Cys2040, Cys2042-Cys2055, Cys2063-Cys2085, Cys2072-Cys2098, Cys2086-Cys2101, Cys2087-Cys2113, Cys2133-Cys2144, Cys2139-Cys2153, Cys2155-Cys2166, Cys2172-Cys2183, Cys2178-Cys2192, Cys2194-Cys2206, Cys2212-Cys2223, Cys2219-Cys2232, Cys2234-Cys2247, Cys2253-Cys2267, Cys2260-Cys2276, Cys2278-Cys2291, Cys2297-Cys2309, Cys2304-Cys2318, and Cys2320-Cys2333. The region spanning Asp1810–Asn1850 is the EGF-like 30; calcium-binding domain. An O-linked (Glc) serine glycan is attached at Ser1832. Residues Asp1851–Leu1892 form the EGF-like 31; calcium-binding domain. Ser1873 is a glycosylation site (O-linked (Glc) serine). The 39-residue stretch at Asp1893 to Ile1931 folds into the EGF-like 32; calcium-binding domain. Residue Asn1904 is glycosylated (N-linked (GlcNAc...) asparagine). Ser1913 is a glycosylation site (O-linked (Glc) serine). The region spanning Asp1932–Val1974 is the EGF-like 33; calcium-binding domain. O-linked (Glc) serine glycosylation is present at Ser1955. One can recognise an EGF-like 34; calcium-binding domain in the interval Asp1975 to Glu2014. The EGF-like 35; calcium-binding domain maps to Asp2015–Gln2056. O-linked (Glc) serine glycosylation is present at Ser2037. The region spanning Ser2061–Cys2113 is the TB 8 domain. Residue Asn2079 is glycosylated (N-linked (GlcNAc...) asparagine). The EGF-like 36; calcium-binding domain occupies Asp2129 to Val2167. O-linked (Glc) serine glycosylation occurs at Ser2150. Residues Asp2168–Glu2207 form the EGF-like 37; calcium-binding domain. A glycan (N-linked (GlcNAc...) asparagine) is linked at Asn2180. The EGF-like 38; calcium-binding domain occupies Asp2208–Lys2248. O-linked (Glc) serine glycosylation is present at Ser2229. One can recognise an EGF-like 39; calcium-binding domain in the interval Asp2249–Ile2292. One can recognise an EGF-like 40; calcium-binding domain in the interval Asp2293–Leu2334. O-linked (Glc) serine glycosylation occurs at Ser2315. Residues Gly2339–Cys2392 form the TB 9 domain. An EGF-like 41; calcium-binding domain is found at Asp2404–Val2445. Intrachain disulfides connect Cys2408/Cys2420, Cys2415/Cys2429, Cys2431/Cys2444, Cys2450/Cys2461, Cys2457/Cys2470, Cys2472/Cys2485, Cys2491/Cys2502, Cys2498/Cys2511, Cys2513/Cys2524, Cys2530/Cys2543, Cys2537/Cys2552, Cys2554/Cys2567, Cys2573/Cys2583, Cys2579/Cys2592, Cys2594/Cys2607, Cys2613/Cys2624, Cys2619/Cys2633, Cys2635/Cys2648, Cys2654/Cys2665, Cys2661/Cys2674, and Cys2676/Cys2688. In terms of domain architecture, EGF-like 42; calcium-binding spans Asp2446–Lys2486. The O-linked (Glc) serine glycan is linked to Ser2467. The region spanning Asp2487–Ile2525 is the EGF-like 43; calcium-binding domain. The 43-residue stretch at Asp2526–Glu2568 folds into the EGF-like 44; calcium-binding domain. Residue Ser2549 is glycosylated (O-linked (Glc) serine). Positions Asp2569–Val2608 constitute an EGF-like 45; calcium-binding domain. Residues Asp2609–Gln2649 enclose the EGF-like 46; calcium-binding domain. Ser2630 carries O-linked (Glc) serine glycosylation. The 40-residue stretch at Asp2650 to Val2689 folds into the EGF-like 47; calcium-binding domain. Phosphoserine occurs at positions 2704, 2705, and 2711. The tract at residues Arg2728–Ser2747 is disordered. N-linked (GlcNAc...) asparagine glycans are attached at residues Asn2736, Asn2752, and Asn2769.

This sequence belongs to the fibrillin family. Interacts with COL16A1. Interacts with integrin alpha-V/beta-3. Interacts with ADAMTS10; this interaction promotes microfibril assembly. Interacts with THSD4; this interaction promotes fibril formation. Interacts (via N-terminal domain) with FBLN2 and FBLN5. Interacts with ELN. Forms a ternary complex with ELN and FBLN2 or FBLN5 and a significant interaction with ELN seen only in the presence of FBLN2 or FBLN5. Interacts (via N-terminal domain) with LTBP2 (via C-terminal domain) in a Ca(+2)-dependent manner. Interacts (via N-terminal domain) with LTBP1 (via C-terminal domain). Interacts with integrins ITGA5:ITGB1, ITGAV:ITGB3 and ITGAV:ITGB6. Interacts (via N-terminal domain) with BMP2, BMP4, BMP7, BMP10 and GDF5. Interacts (via N-terminal domain) with MFAP2 and MFAP5. Interacts with ADAMTSL5. Interacts with MFAP4. Interacts (via N-terminal domain) with TNFSF11 in a Ca(+2)-dependent manner. Interacts (via N-terminal domain) with EFEMP2; this interaction inhibits EFEMP2 binding to LOX and ELN. In terms of processing, cleavage of N- and C-terminus by furin is required for incorporation into the extracellular matrix and assembly into microfibrils. The C-terminus, which corresponds to the Asprosin chain, was initially thought to constitute a propeptide. Fibrillin-1 and Asprosin chains are still linked together during the secretion from cells, but are subsequently separated by furin, an essential step for incorporation of Fibrillin-1 into the nascent microfibrils. Forms intermolecular disulfide bonds either with other fibrillin-1 molecules or with other components of the microfibrils. Post-translationally, O-glycosylated on serine residues by POGLUT2 and POGLUT3 which is necessary for efficient protein secretion. In terms of tissue distribution, strongly expressed during the first week of osteoblast differentiation. Secreted by white adipose tissue (at protein level).

It is found in the secreted. Its subcellular location is the extracellular space. The protein localises to the extracellular matrix. Structural component of the 10-12 nm diameter microfibrils of the extracellular matrix, which conveys both structural and regulatory properties to load-bearing connective tissues. Fibrillin-1-containing microfibrils provide long-term force bearing structural support. In tissues such as the lung, blood vessels and skin, microfibrils form the periphery of the elastic fiber, acting as a scaffold for the deposition of elastin. In addition, microfibrils can occur as elastin-independent networks in tissues such as the ciliary zonule, tendon, cornea and glomerulus where they provide tensile strength and have anchoring roles. Fibrillin-1 also plays a key role in tissue homeostasis through specific interactions with growth factors, such as the bone morphogenetic proteins (BMPs), growth and differentiation factors (GDFs) and latent transforming growth factor-beta-binding proteins (LTBPs), cell-surface integrins and other extracellular matrix protein and proteoglycan components. Regulates osteoblast maturation by controlling TGF-beta bioavailability and calibrating TGF-beta and BMP levels, respectively. Negatively regulates osteoclastogenesis by binding and sequestering an osteoclast differentiation and activation factor TNFSF11. This leads to disruption of TNFSF11-induced Ca(2+) signaling and impairment of TNFSF11-mediated nuclear translocation and activation of transcription factor NFATC1 which regulates genes important for osteoclast differentiation and function. Mediates cell adhesion via its binding to cell surface receptors integrins ITGAV:ITGB3 and ITGA5:ITGB1. Binds heparin and this interaction plays an important role in the assembly of microfibrils. In terms of biological role, adipokine secreted by white adipose tissue that plays an important regulatory role in the glucose metabolism of liver, muscle and pancreas. Hormone that targets the liver in response to fasting to increase plasma glucose levels. Binds the olfactory receptor Olfr734 at the surface of hepatocytes and promotes hepatocyte glucose release by activating the protein kinase A activity in the liver, resulting in rapid glucose release into the circulation. May act as a regulator of adaptive thermogenesis by inhibiting browning and energy consumption, while increasing lipid deposition in white adipose tissue. Also acts as an orexigenic hormone that increases appetite: crosses the blood brain barrier and exerts effects on the hypothalamus. In the arcuate nucleus of the hypothalamus, asprosin directly activates orexigenic AgRP neurons and indirectly inhibits anorexigenic POMC neurons, resulting in appetite stimulation. Activates orexigenic AgRP neurons via binding to the olfactory receptor Olfr734. May also play a role in sperm motility in testis via interaction with Olfr734 receptor. The protein is Fibrillin-1 of Mus musculus (Mouse).